We begin with the raw amino-acid sequence, 197 residues long: Imidazoleglycerol-phosphate dehydratase (197 aa).

It belongs to the imidazoleglycerol-phosphate dehydratase family.

The protein localises to the cytoplasm. The enzyme catalyses D-erythro-1-(imidazol-4-yl)glycerol 3-phosphate = 3-(imidazol-4-yl)-2-oxopropyl phosphate + H2O. Its pathway is amino-acid biosynthesis; L-histidine biosynthesis; L-histidine from 5-phospho-alpha-D-ribose 1-diphosphate: step 6/9. The polypeptide is Imidazoleglycerol-phosphate dehydratase (Rhodopseudomonas palustris (strain ATCC BAA-98 / CGA009)).